Consider the following 94-residue polypeptide: Small ribosomal subunit protein uS19 (94 aa).

The protein belongs to the universal ribosomal protein uS19 family.

Its function is as follows. Protein S19 forms a complex with S13 that binds strongly to the 16S ribosomal RNA. This is Small ribosomal subunit protein uS19 from Syntrophomonas wolfei subsp. wolfei (strain DSM 2245B / Goettingen).